A 377-amino-acid polypeptide reads, in one-letter code: Nitric oxide reductase FlRd-NAD(+) reductase (377 aa).

This sequence belongs to the FAD-dependent oxidoreductase family. Requires FAD as cofactor.

The protein localises to the cytoplasm. It catalyses the reaction 2 reduced [nitric oxide reductase rubredoxin domain] + NAD(+) + H(+) = 2 oxidized [nitric oxide reductase rubredoxin domain] + NADH. It functions in the pathway nitrogen metabolism; nitric oxide reduction. In terms of biological role, one of at least two accessory proteins for anaerobic nitric oxide (NO) reductase. Reduces the rubredoxin moiety of NO reductase. The chain is Nitric oxide reductase FlRd-NAD(+) reductase from Escherichia coli O6:K15:H31 (strain 536 / UPEC).